We begin with the raw amino-acid sequence, 342 residues long: Peptide chain release factor 1 (342 aa).

Gln-211 is modified (N5-methylglutamine). A disordered region spans residues 262–282 (KEREISQKRKSQIGTGERSEK).

This sequence belongs to the prokaryotic/mitochondrial release factor family. In terms of processing, methylated by PrmC. Methylation increases the termination efficiency of RF1.

Its subcellular location is the cytoplasm. Peptide chain release factor 1 directs the termination of translation in response to the peptide chain termination codons UAG and UAA. The protein is Peptide chain release factor 1 (prfA) of Thermotoga maritima (strain ATCC 43589 / DSM 3109 / JCM 10099 / NBRC 100826 / MSB8).